Consider the following 281-residue polypeptide: Probable endonuclease 4 (281 aa).

9 residues coordinate Zn(2+): H69, H109, E145, D179, H182, H216, D229, H231, and E261.

The protein belongs to the AP endonuclease 2 family. The cofactor is Zn(2+).

It catalyses the reaction Endonucleolytic cleavage to 5'-phosphooligonucleotide end-products.. Functionally, endonuclease IV plays a role in DNA repair. It cleaves phosphodiester bonds at apurinic or apyrimidinic (AP) sites, generating a 3'-hydroxyl group and a 5'-terminal sugar phosphate. The polypeptide is Probable endonuclease 4 (Pectobacterium carotovorum subsp. carotovorum (strain PC1)).